Here is a 90-residue protein sequence, read N- to C-terminus: UPF0512 protein L (90 aa).

This sequence belongs to the UPF0512 family.

The sequence is that of UPF0512 protein L from Dictyostelium discoideum (Social amoeba).